The chain runs to 208 residues: Thymidylate kinase (208 aa).

10–17 (GLEGAGKS) contributes to the ATP binding site.

It belongs to the thymidylate kinase family.

The catalysed reaction is dTMP + ATP = dTDP + ADP. Phosphorylation of dTMP to form dTDP in both de novo and salvage pathways of dTTP synthesis. This Glaesserella parasuis serovar 5 (strain SH0165) (Haemophilus parasuis) protein is Thymidylate kinase.